The chain runs to 573 residues: Proline--tRNA ligase (573 aa).

This sequence belongs to the class-II aminoacyl-tRNA synthetase family. ProS type 1 subfamily. In terms of assembly, homodimer.

The protein resides in the cytoplasm. The enzyme catalyses tRNA(Pro) + L-proline + ATP = L-prolyl-tRNA(Pro) + AMP + diphosphate. Its function is as follows. Catalyzes the attachment of proline to tRNA(Pro) in a two-step reaction: proline is first activated by ATP to form Pro-AMP and then transferred to the acceptor end of tRNA(Pro). As ProRS can inadvertently accommodate and process non-cognate amino acids such as alanine and cysteine, to avoid such errors it has two additional distinct editing activities against alanine. One activity is designated as 'pretransfer' editing and involves the tRNA(Pro)-independent hydrolysis of activated Ala-AMP. The other activity is designated 'posttransfer' editing and involves deacylation of mischarged Ala-tRNA(Pro). The misacylated Cys-tRNA(Pro) is not edited by ProRS. The chain is Proline--tRNA ligase from Limosilactobacillus fermentum (strain NBRC 3956 / LMG 18251) (Lactobacillus fermentum).